Reading from the N-terminus, the 429-residue chain is Glucose-1-phosphate adenylyltransferase (429 aa).

Alpha-D-glucose 1-phosphate is bound by residues Gly-162, 177 to 178, and Ser-209; that span reads EK.

This sequence belongs to the bacterial/plant glucose-1-phosphate adenylyltransferase family. As to quaternary structure, homotetramer.

It carries out the reaction alpha-D-glucose 1-phosphate + ATP + H(+) = ADP-alpha-D-glucose + diphosphate. It participates in glycan biosynthesis; glycogen biosynthesis. Its function is as follows. Involved in the biosynthesis of ADP-glucose, a building block required for the elongation reactions to produce glycogen. Catalyzes the reaction between ATP and alpha-D-glucose 1-phosphate (G1P) to produce pyrophosphate and ADP-Glc. The chain is Glucose-1-phosphate adenylyltransferase from Cyanothece sp. (strain PCC 7425 / ATCC 29141).